A 390-amino-acid chain; its full sequence is Lipid-A-disaccharide synthase (390 aa).

The protein belongs to the LpxB family.

The catalysed reaction is a lipid X + a UDP-2-N,3-O-bis[(3R)-3-hydroxyacyl]-alpha-D-glucosamine = a lipid A disaccharide + UDP + H(+). The protein operates within bacterial outer membrane biogenesis; LPS lipid A biosynthesis. Condensation of UDP-2,3-diacylglucosamine and 2,3-diacylglucosamine-1-phosphate to form lipid A disaccharide, a precursor of lipid A, a phosphorylated glycolipid that anchors the lipopolysaccharide to the outer membrane of the cell. This Paramagnetospirillum magneticum (strain ATCC 700264 / AMB-1) (Magnetospirillum magneticum) protein is Lipid-A-disaccharide synthase.